Consider the following 624-residue polypeptide: DNA-directed RNA polymerase III subunit rpc-3 (624 aa).

2 disordered regions span residues 229 to 260 and 373 to 418; these read KRKLAQNGGASKRRKLAVGNETNGAPEEEEDL and LAPK…ARMS. A compositionally biased stretch (acidic residues) spans 385-403; sequence DDSDDDEEDGDYSDSDEEM. Residues 551-572 form a leucine-zipper region; the sequence is CYATMVHCLQVLEVRRQKDKDV.

This sequence belongs to the RNA polymerase beta chain family. In terms of assembly, component of the RNA polymerase III (Pol III) complex consisting of 17 subunits.

It localises to the nucleus. DNA-dependent RNA polymerase catalyzes the transcription of DNA into RNA using the four ribonucleoside triphosphates as substrates. Specific core component of RNA polymerase III which synthesizes small RNAs, such as 5S rRNA and tRNAs. This chain is DNA-directed RNA polymerase III subunit rpc-3 (rpc-82), found in Neurospora crassa (strain ATCC 24698 / 74-OR23-1A / CBS 708.71 / DSM 1257 / FGSC 987).